The sequence spans 537 residues: Putative cysteine ligase BshC (537 aa).

Residues 383–451 are a coiled coil; sequence MERTQKLLKQ…EVKENQDNFN (69 aa).

Belongs to the BshC family.

Its function is as follows. Involved in bacillithiol (BSH) biosynthesis. May catalyze the last step of the pathway, the addition of cysteine to glucosamine malate (GlcN-Mal) to generate BSH. The protein is Putative cysteine ligase BshC of Staphylococcus haemolyticus (strain JCSC1435).